The chain runs to 99 residues: Protein dpy-30 homolog (99 aa).

An N-acetylmethionine modification is found at methionine 1. Residues 1 to 26 are disordered; sequence MEPEQMLEGQTQVAENPHSEYGLTDN. Serine 19 carries the post-translational modification Phosphoserine. N6-acetyllysine; alternate is present on lysine 35. Lysine 35 participates in a covalent cross-link: Glycyl lysine isopeptide (Lys-Gly) (interchain with G-Cter in SUMO2); alternate.

This sequence belongs to the dpy-30 family. In terms of assembly, homodimer. Core component of several methyltransferase-containing complexes including MLL1/MLL, MLL2/3 (also named ASCOM complex) and MLL4/WBP7. Each complex is at least composed of ASH2L, RBBP5, WDR5, DPY30, one or more specific histone methyltransferases (KMT2A/MLL1, KMT2D/MLL2, KMT2C/MLL3 and KMT2B/MLL4), and the facultative components MEN1, HCFC1, HCFC2, NCOA6, KDM6A, PAXIP1/PTIP, PAGR1 and alpha- and beta-tubulin. Interacts with ASH2L; the interaction is direct. Interacts with ARFGEF1. Component of the SET1 complex, at least composed of the catalytic subunit (SETD1A or SETD1B), WDR5, WDR82, RBBP5, ASH2L/ASH2, CXXC1/CFP1, HCFC1 and DPY30.

Its subcellular location is the nucleus. The protein localises to the golgi apparatus. It is found in the trans-Golgi network. Functionally, as part of the MLL1/MLL complex, involved in the methylation of histone H3 at 'Lys-4', particularly trimethylation. Histone H3 'Lys-4' methylation represents a specific tag for epigenetic transcriptional activation. May play some role in histone H3 acetylation. In embryonic stem cells, may play a crucial role in retinoic acid-induced differentiation along the neural lineage, regulating gene induction and H3 'Lys-4' methylation at key developmental loci. May also play an indirect or direct role in endosomal transport. This is Protein dpy-30 homolog (DPY30) from Bos taurus (Bovine).